A 122-amino-acid chain; its full sequence is Large ribosomal subunit protein uL14 (122 aa).

The protein belongs to the universal ribosomal protein uL14 family. Part of the 50S ribosomal subunit. Forms a cluster with proteins L3 and L19. In the 70S ribosome, L14 and L19 interact and together make contacts with the 16S rRNA in bridges B5 and B8.

Functionally, binds to 23S rRNA. Forms part of two intersubunit bridges in the 70S ribosome. The polypeptide is Large ribosomal subunit protein uL14 (Syntrophobacter fumaroxidans (strain DSM 10017 / MPOB)).